The following is a 153-amino-acid chain: Putative pre-16S rRNA nuclease (153 aa).

The protein belongs to the YqgF nuclease family.

The protein resides in the cytoplasm. Functionally, could be a nuclease involved in processing of the 5'-end of pre-16S rRNA. The polypeptide is Putative pre-16S rRNA nuclease (Chloroflexus aurantiacus (strain ATCC 29366 / DSM 635 / J-10-fl)).